Consider the following 310-residue polypeptide: Methionyl-tRNA formyltransferase (310 aa).

(6S)-5,6,7,8-tetrahydrofolate is bound at residue 114–117 (SLLP).

The protein belongs to the Fmt family.

It carries out the reaction L-methionyl-tRNA(fMet) + (6R)-10-formyltetrahydrofolate = N-formyl-L-methionyl-tRNA(fMet) + (6S)-5,6,7,8-tetrahydrofolate + H(+). Its function is as follows. Attaches a formyl group to the free amino group of methionyl-tRNA(fMet). The formyl group appears to play a dual role in the initiator identity of N-formylmethionyl-tRNA by promoting its recognition by IF2 and preventing the misappropriation of this tRNA by the elongation apparatus. This is Methionyl-tRNA formyltransferase from Granulibacter bethesdensis (strain ATCC BAA-1260 / CGDNIH1).